The chain runs to 79 residues: uncharacterized protein (79 aa).

It belongs to the asfivirus D79L family.

This is an uncharacterized protein from Ornithodoros (relapsing fever ticks).